A 274-amino-acid chain; its full sequence is MARKISDYHLKKREETQKKFIDLLAQNNYIHISGDMVNSKTKVKVRCRHNHTWQVNYEHFKKGTRCPECRIIEGSLKKRLNISTVKSRYALKGYEILSTYKNCHSKLKAKCPEGHIWEHLPSNFFKGEECFQCKGAKKYTVECAQAAFSDRGFIPLFDTYHHNKENLPFLCKEHIDLGVQYAPLHNMVRGLANCRKCYLLLFTGENSSRWKGGISSLNKTLREAVYEVWTKPSLEKYSFKCAITNSTKDLHVHHYKKNFSEIVKEALSNLSFEL.

This is SPbeta prophage-derived uncharacterized protein YomD (yomD) from Bacillus subtilis (strain 168).